Reading from the N-terminus, the 388-residue chain is Processive diacylglycerol beta-glucosyltransferase (388 aa).

This sequence belongs to the glycosyltransferase 28 family. UgtP subfamily.

Its subcellular location is the cell membrane. It catalyses the reaction a 1,2-diacyl-3-O-(beta-D-glucopyranosyl)-sn-glycerol + UDP-alpha-D-glucose = a 1,2-diacyl-3-O-(beta-D-Glc-(1-&gt;6)-beta-D-Glc)-sn-glycerol + UDP + H(+). The enzyme catalyses a 1,2-diacyl-3-O-(beta-D-Glc-(1-&gt;6)-beta-D-Glc)-sn-glycerol + UDP-alpha-D-glucose = a 1,2-diacyl-3-O-(beta-D-Glc-(1-&gt;6)-beta-D-Glc-(1-&gt;6)-beta-D-Glc)-sn-glycerol + UDP + H(+). The catalysed reaction is a 1,2-diacyl-sn-glycerol + UDP-alpha-D-glucose = a 1,2-diacyl-3-O-(beta-D-glucopyranosyl)-sn-glycerol + UDP + H(+). The protein operates within glycolipid metabolism; diglucosyl-diacylglycerol biosynthesis. Its function is as follows. Processive glucosyltransferase involved in the biosynthesis of both the bilayer- and non-bilayer-forming membrane glucolipids. Is able to successively transfer up to three glucosyl residues to diacylglycerol (DAG), thereby catalyzing the formation of beta-monoglucosyl-DAG (3-O-(beta-D-glucopyranosyl)-1,2-diacyl-sn-glycerol), beta-diglucosyl-DAG (3-O-(beta-D-glucopyranosyl-beta-(1-&gt;6)-D-glucopyranosyl)-1,2-diacyl-sn-glycerol) and beta-triglucosyl-DAG (3-O-(beta-D-glucopyranosyl-beta-(1-&gt;6)-D-glucopyranosyl-beta-(1-&gt;6)-D-glucopyranosyl)-1,2-diacyl-sn-glycerol). Beta-diglucosyl-DAG is the predominant glycolipid found in Bacillales and is also used as a membrane anchor for lipoteichoic acid (LTA). The polypeptide is Processive diacylglycerol beta-glucosyltransferase (Bacillus cereus (strain ATCC 14579 / DSM 31 / CCUG 7414 / JCM 2152 / NBRC 15305 / NCIMB 9373 / NCTC 2599 / NRRL B-3711)).